The following is a 371-amino-acid chain: Opsin, ultraviolet-sensitive (371 aa).

Over 1–52 the chain is Extracellular; that stretch reads MSNDSIHWEARYLPAGPPRLLGWNVPAEELIHIPEHWLVYPEPNPSLHYLLA. Asparagine 3 carries an N-linked (GlcNAc...) asparagine glycan. Residues 53 to 73 form a helical membrane-spanning segment; it reads LLYILFTFLALLGNGLVIWIF. Over 74–84 the chain is Cytoplasmic; sequence CAAKSLRTPSN. Residues 85–105 form a helical membrane-spanning segment; the sequence is MFVVNLAICDFFMMIKTPIFI. Residues 106 to 121 are Extracellular-facing; that stretch reads YNSFNTGFALGNLGCQ. Cysteine 120 and cysteine 197 are joined by a disulfide. A helical transmembrane segment spans residues 122–142; the sequence is IFAVIGSLTGIGAAITNAAIA. At 143–161 the chain is on the cytoplasmic side; sequence YDRYSTIARPLDGKLSRGQ. A helical transmembrane segment spans residues 162 to 182; sequence VILFIVLIWTYTIPWALMPVM. The Extracellular segment spans residues 183 to 209; sequence GVWGRFVPEGFLTSCSFDYLTDTNEIR. A helical membrane pass occupies residues 210–230; that stretch reads IFVATIFTFSYCIPMILIIYY. Residues 231–278 lie on the Cytoplasmic side of the membrane; it reads YSQIVSHVVNHEKALREQAKKMNVDSLRSNANTSSQSAEIRIAKAAIT. The chain crosses the membrane as a helical span at residues 279-299; that stretch reads ICFLYVLSWTPYGVMSMIGAF. At 300 to 302 the chain is on the extracellular side; sequence GNK. The chain crosses the membrane as a helical span at residues 303 to 323; the sequence is ALLTPGVTMIPACTCKAVACL. Lysine 318 is modified (N6-(retinylidene)lysine). At 324-371 the chain is on the cytoplasmic side; that stretch reads DPYVYAISHPKYRLELQKRLPWLELQEKPISDSTSTTTETVNTPPASS.

It belongs to the G-protein coupled receptor 1 family. Opsin subfamily. Phosphorylated on some or all of the serine and threonine residues present in the C-terminal region. In terms of tissue distribution, expressed in the dorsal region of the retina.

It localises to the membrane. Its function is as follows. Visual pigments are the light-absorbing molecules that mediate vision. They consist of an apoprotein, opsin, covalently linked to 11-cis-retinal. In Apis mellifera (Honeybee), this protein is Opsin, ultraviolet-sensitive (UVOP).